The primary structure comprises 199 residues: uncharacterized protein (199 aa).

The chain crosses the membrane as a helical span at residues 7–27; it reads FWFWLILGIIALFIIVKAIVI.

It belongs to the band 7/mec-2 family.

The protein localises to the membrane. This is an uncharacterized protein from Methanocaldococcus jannaschii (strain ATCC 43067 / DSM 2661 / JAL-1 / JCM 10045 / NBRC 100440) (Methanococcus jannaschii).